A 159-amino-acid chain; its full sequence is Cyclic pyranopterin monophosphate synthase (159 aa).

Residues 75–77 (LCH) and 113–114 (ME) each bind substrate. Residue D128 is part of the active site.

The protein belongs to the MoaC family. Homohexamer; trimer of dimers.

The enzyme catalyses (8S)-3',8-cyclo-7,8-dihydroguanosine 5'-triphosphate = cyclic pyranopterin phosphate + diphosphate. Its pathway is cofactor biosynthesis; molybdopterin biosynthesis. Functionally, catalyzes the conversion of (8S)-3',8-cyclo-7,8-dihydroguanosine 5'-triphosphate to cyclic pyranopterin monophosphate (cPMP). This chain is Cyclic pyranopterin monophosphate synthase, found in Burkholderia multivorans (strain ATCC 17616 / 249).